The chain runs to 925 residues: Neuronal PAS domain-containing protein 3 (925 aa).

The bHLH domain maps to 58–111 (LRKEKSRDAARSRRGKENFEFYELAKLLPLPAAITSQLDKASIIRLTISYLKMR). Residues 60–71 (KEKSRDAARSRR) are DNA-binding. Disordered regions lie at residues 119–138 (PPWN…KGAQ) and 219–257 (LPPG…SPSL). Residues 152-222 (EAHLGSHILQ…EQLGMKLPPG (71 aa)) enclose the PAS 1 domain. Positions 234–256 (AASSASSSSQSETPEPVETTSPS) are enriched in low complexity. One can recognise a PAS 2 domain in the interval 324–394 (PPPTINEVRI…HSHLDLLNKG (71 aa)). One can recognise a PAC domain in the interval 398 to 441 (TKYYRWMQKNGGYIWIQSSATIAINAKNANEKNIIWVNYLLSNP). Disordered regions lie at residues 457–555 (PEKA…FGAL), 576–645 (PCES…SSPH), and 664–774 (NESS…GASN). Composition is skewed to basic and acidic residues over residues 484–493 (ENSKSDEKGN) and 529–549 (DSRD…KAAE). Basic residues predominate over residues 601-622 (KHQKRKRRRKRQKGGSASRRRL). Polar residues predominate over residues 680-690 (NESPYSMTKPP). Composition is skewed to gly residues over residues 700 to 710 (GQGGSIGGGGA) and 760 to 771 (GGGAGSGGGGPG).

Efficient DNA binding requires dimerization with another bHLH protein. Interacts with ARNT; forms a heterodimer that binds core DNA sequence 5'-[AG]CGTG-3' within the hypoxia response element (HRE) of target gene promoters. As to expression, detected exclusively in adult brain in inhibitory interneurons.

It localises to the nucleus. In terms of biological role, may play a broad role in neurogenesis. May control regulatory pathways relevant to schizophrenia and to psychotic illness. This Mus musculus (Mouse) protein is Neuronal PAS domain-containing protein 3 (Npas3).